Here is a 183-residue protein sequence, read N- to C-terminus: Peptidyl-tRNA hydrolase (183 aa).

Residue Tyr-15 participates in tRNA binding. His-20 acts as the Proton acceptor in catalysis. TRNA contacts are provided by Tyr-67 and Asn-69.

This sequence belongs to the PTH family. In terms of assembly, monomer.

It is found in the cytoplasm. It carries out the reaction an N-acyl-L-alpha-aminoacyl-tRNA + H2O = an N-acyl-L-amino acid + a tRNA + H(+). In terms of biological role, hydrolyzes ribosome-free peptidyl-tRNAs (with 1 or more amino acids incorporated), which drop off the ribosome during protein synthesis, or as a result of ribosome stalling. Its function is as follows. Catalyzes the release of premature peptidyl moieties from peptidyl-tRNA molecules trapped in stalled 50S ribosomal subunits, and thus maintains levels of free tRNAs and 50S ribosomes. The polypeptide is Peptidyl-tRNA hydrolase (Chlamydia abortus (strain DSM 27085 / S26/3) (Chlamydophila abortus)).